A 566-amino-acid chain; its full sequence is Chaperonin GroEL 1 (566 aa).

ATP contacts are provided by residues 29–32, 86–90, Gly-413, and Asp-492; these read TIGP and DGTTT. A disordered region spans residues 520 to 540; it reads DKPEPPAPAGDGGGDPMGGMG. The span at 529-540 shows a compositional bias: gly residues; that stretch reads GDGGGDPMGGMG.

This sequence belongs to the chaperonin (HSP60) family. Forms a cylinder of 14 subunits composed of two heptameric rings stacked back-to-back. Interacts with the co-chaperonin GroES.

The protein localises to the cytoplasm. It catalyses the reaction ATP + H2O + a folded polypeptide = ADP + phosphate + an unfolded polypeptide.. In terms of biological role, together with its co-chaperonin GroES, plays an essential role in assisting protein folding. The GroEL-GroES system forms a nano-cage that allows encapsulation of the non-native substrate proteins and provides a physical environment optimized to promote and accelerate protein folding. The sequence is that of Chaperonin GroEL 1 from Prochlorococcus marinus (strain MIT 9313).